Reading from the N-terminus, the 508-residue chain is Maturase K (508 aa).

It belongs to the intron maturase 2 family. MatK subfamily.

The protein localises to the plastid. Its subcellular location is the chloroplast. In terms of biological role, usually encoded in the trnK tRNA gene intron. Probably assists in splicing its own and other chloroplast group II introns. This chain is Maturase K, found in Manilkara zapota (Sapodilla plum).